We begin with the raw amino-acid sequence, 516 residues long: Cytochrome P450 monooxygenase dtxS2 (516 aa).

The chain crosses the membrane as a helical span at residues 23-43 (ILASVIVLLGLKVATILYTAF). Asn-187 is a glycosylation site (N-linked (GlcNAc...) asparagine). A helical membrane pass occupies residues 229 to 249 (VLVPLLVFPYISWLLVWWLLS). Residue Cys-458 participates in heme binding.

Belongs to the cytochrome P450 family. The cofactor is heme.

The protein localises to the membrane. Its pathway is secondary metabolite biosynthesis. Its function is as follows. Cytochrome P450 monooxygenase; part of the gene cluster that mediates the biosynthesis of destruxins, insecticidal cyclic hexadepsipeptides which induce flaccid paralysis and visceral muscle contraction in insects through targeting the calcium channels and vacuolar-type ATPases. The aldo-keto reductase dtxS3 converts alpha-ketoisocaproic acid from deaminated leucine into alpha-hydroxyisocaproic acid (HIC), which is the first substrate for destruxin assembly by dtxS1. L-aspartate decarboxylase dtxS4 converts aspartic acid into beta-alanine, the last substrate for the destruxin assembly line performed by dtxS1. The nonribosomal peptide synthetase dtxS1 synthesizes destruxins B and B2, whereas the cytochrome P450 monooxygenase dtxS2 is required to convert destruxin B into other destruxin derivatives, including destructins C, D, A and E. Destruxin E-diol (ED) is further produced in a non-enzymatic manner from destruxin E. Destruxins play an important role in virulence and escape from insect host immune defenses. The sequence is that of Cytochrome P450 monooxygenase dtxS2 from Metarhizium robertsii (strain ARSEF 23 / ATCC MYA-3075) (Metarhizium anisopliae (strain ARSEF 23)).